Reading from the N-terminus, the 210-residue chain is Uridine kinase (210 aa).

An ATP-binding site is contributed by 12–19; that stretch reads GGSGGGKT.

This sequence belongs to the uridine kinase family.

It localises to the cytoplasm. It catalyses the reaction uridine + ATP = UMP + ADP + H(+). It carries out the reaction cytidine + ATP = CMP + ADP + H(+). It functions in the pathway pyrimidine metabolism; CTP biosynthesis via salvage pathway; CTP from cytidine: step 1/3. The protein operates within pyrimidine metabolism; UMP biosynthesis via salvage pathway; UMP from uridine: step 1/1. The protein is Uridine kinase of Streptococcus gordonii (strain Challis / ATCC 35105 / BCRC 15272 / CH1 / DL1 / V288).